Here is a 490-residue protein sequence, read N- to C-terminus: Glutamate--tRNA ligase (490 aa).

The short motif at 13 to 23 (PSPTGTPHVGL) is the 'HIGH' region element. Residues 257–261 (KLSKR) carry the 'KMSKS' region motif. An ATP-binding site is contributed by K260.

Belongs to the class-I aminoacyl-tRNA synthetase family. Glutamate--tRNA ligase type 1 subfamily. As to quaternary structure, monomer.

Its subcellular location is the cytoplasm. The catalysed reaction is tRNA(Glu) + L-glutamate + ATP = L-glutamyl-tRNA(Glu) + AMP + diphosphate. Its function is as follows. Catalyzes the attachment of glutamate to tRNA(Glu) in a two-step reaction: glutamate is first activated by ATP to form Glu-AMP and then transferred to the acceptor end of tRNA(Glu). This chain is Glutamate--tRNA ligase, found in Mycobacterium tuberculosis (strain ATCC 25177 / H37Ra).